The primary structure comprises 283 residues: Glutamate racemase (283 aa).

Residues 28-29 and 60-61 each bind substrate; these read DS and YG. Cys-92 (proton donor/acceptor) is an active-site residue. 93 to 94 is a binding site for substrate; it reads NS. The Proton donor/acceptor role is filled by Cys-204. Substrate is bound at residue 205–206; it reads TH.

It belongs to the aspartate/glutamate racemases family.

The catalysed reaction is L-glutamate = D-glutamate. It participates in cell wall biogenesis; peptidoglycan biosynthesis. Functionally, provides the (R)-glutamate required for cell wall biosynthesis. The protein is Glutamate racemase of Erwinia tasmaniensis (strain DSM 17950 / CFBP 7177 / CIP 109463 / NCPPB 4357 / Et1/99).